A 197-amino-acid chain; its full sequence is C4-dicarboxylate transport transcriptional regulatory protein DctR (197 aa).

The 117-residue stretch at 4 to 120 folds into the Response regulatory domain; sequence TVHIVDDEES…HIVDIALSAI (117 aa). D53 carries the post-translational modification 4-aspartylphosphate. An inter-domain linker region spans residues 128-135; that stretch reads AEAQAREA. The HTH luxR-type domain occupies 136–197; that stretch reads VAARRASLSA…RNIADLARMT (62 aa). Positions 160–179 form a DNA-binding region, H-T-H motif; sequence NKQIAERLGIAMRTVEVHRS.

Post-translationally, phosphorylated by DctS.

The protein resides in the cytoplasm. Its function is as follows. Member of the two-component regulatory system DctS/DctR involved in the transport of C4-dicarboxylates. DctR functions as a transcriptional repressor of genes for C4-dicarboxylate transport. The polypeptide is C4-dicarboxylate transport transcriptional regulatory protein DctR (dctR) (Rhodobacter capsulatus (Rhodopseudomonas capsulata)).